A 143-amino-acid chain; its full sequence is Transcriptional regulator SlyA (143 aa).

The region spanning 2-135 (ESTLGSDLAR…LSGLIDKLEK (134 aa)) is the HTH marR-type domain. Residues 49–72 (QIQLAKAIGIEQPSLVRTLDQLEE) constitute a DNA-binding region (H-T-H motif).

Belongs to the SlyA family. Homodimer.

In terms of biological role, transcription regulator that can specifically activate or repress expression of target genes. The sequence is that of Transcriptional regulator SlyA from Yersinia pestis (strain Pestoides F).